A 148-amino-acid chain; its full sequence is Large ribosomal subunit protein bL9 (148 aa).

This sequence belongs to the bacterial ribosomal protein bL9 family.

In terms of biological role, binds to the 23S rRNA. In Listeria innocua serovar 6a (strain ATCC BAA-680 / CLIP 11262), this protein is Large ribosomal subunit protein bL9.